The primary structure comprises 145 residues: Nickel-responsive regulator (145 aa).

Histidine 77, histidine 88, histidine 90, and cysteine 96 together coordinate Ni(2+).

The protein belongs to the transcriptional regulatory CopG/NikR family. As to quaternary structure, homotetramer. The cofactor is Ni(2+).

Its function is as follows. Transcriptional repressor of the nikABCDE operon. Is active in the presence of excessive concentrations of intracellular nickel. The chain is Nickel-responsive regulator from Edwardsiella ictaluri (strain 93-146).